Consider the following 202-residue polypeptide: Small ribosomal subunit protein uS4 (202 aa).

The segment at 18–42 (LPGLTRKAAKRSYPPGQHGQARRKR) is disordered. Residues 90–152 (NRLDNVCFRL…KPSKKLAETN (63 aa)) enclose the S4 RNA-binding domain.

It belongs to the universal ribosomal protein uS4 family. In terms of assembly, part of the 30S ribosomal subunit. Contacts protein S5. The interaction surface between S4 and S5 is involved in control of translational fidelity.

In terms of biological role, one of the primary rRNA binding proteins, it binds directly to 16S rRNA where it nucleates assembly of the body of the 30S subunit. Its function is as follows. With S5 and S12 plays an important role in translational accuracy. The chain is Small ribosomal subunit protein uS4 from Synechococcus sp. (strain RCC307).